The following is a 314-amino-acid chain: Small ribosomal subunit biogenesis GTPase RsgA (314 aa).

Positions 1-21 (MKRAPTKQPAKPAARGGERAQ) are disordered. One can recognise a CP-type G domain in the interval 85–246 (SDQFKSKLFA…LIDSPGFQEF (162 aa)). GTP contacts are provided by residues 134 to 137 (NKID) and 188 to 196 (GQSGMGKST). Zn(2+) contacts are provided by Cys270, Cys275, His277, and Cys283.

The protein belongs to the TRAFAC class YlqF/YawG GTPase family. RsgA subfamily. In terms of assembly, monomer. Associates with 30S ribosomal subunit, binds 16S rRNA. Requires Zn(2+) as cofactor.

It is found in the cytoplasm. One of several proteins that assist in the late maturation steps of the functional core of the 30S ribosomal subunit. Helps release RbfA from mature subunits. May play a role in the assembly of ribosomal proteins into the subunit. Circularly permuted GTPase that catalyzes slow GTP hydrolysis, GTPase activity is stimulated by the 30S ribosomal subunit. The protein is Small ribosomal subunit biogenesis GTPase RsgA of Burkholderia pseudomallei (strain 1106a).